The following is a 303-amino-acid chain: Protease HtpX (303 aa).

The next 2 membrane-spanning stretches (helical) occupy residues 4–24 (IGLF…VFGI) and 42–62 (IASL…ISLF). His149 serves as a coordination point for Zn(2+). Glu150 is an active-site residue. His153 provides a ligand contact to Zn(2+). The next 2 membrane-spanning stretches (helical) occupy residues 157–177 (GDMV…MFFA) and 200–220 (FVTS…IVMW). Glu226 is a binding site for Zn(2+).

It belongs to the peptidase M48B family. Requires Zn(2+) as cofactor.

It is found in the cell inner membrane. This Psychrobacter sp. (strain PRwf-1) protein is Protease HtpX.